The primary structure comprises 503 residues: Glutamate--tRNA ligase (503 aa).

The 'HIGH' region signature appears at 12–22 (PSPTGYLHVGG). The 'KMSKS' region signature appears at 259-263 (KLSKR). K262 contacts ATP.

This sequence belongs to the class-I aminoacyl-tRNA synthetase family. Glutamate--tRNA ligase type 1 subfamily. Monomer.

The protein localises to the cytoplasm. It carries out the reaction tRNA(Glu) + L-glutamate + ATP = L-glutamyl-tRNA(Glu) + AMP + diphosphate. Functionally, catalyzes the attachment of glutamate to tRNA(Glu) in a two-step reaction: glutamate is first activated by ATP to form Glu-AMP and then transferred to the acceptor end of tRNA(Glu). The polypeptide is Glutamate--tRNA ligase (Chloroherpeton thalassium (strain ATCC 35110 / GB-78)).